We begin with the raw amino-acid sequence, 1472 residues long: ABC transporter FGM5 (1472 aa).

11 consecutive transmembrane segments (helical) span residues 32-52, 67-87, 100-120, 163-183, 197-217, 271-291, 316-336, 386-406, 412-432, 493-513, and 534-554; these read IILG…RVAT, FTKL…LILS, FAVA…ALSF, YAGV…LELQ, SPEE…IGIF, ALIV…GFQY, GLIG…ALFW, FHGL…CFLL, LAFI…TAIA, LLIM…VVAF, and LLTN…AAFV. The region spanning 284 to 551 is the ABC transmembrane type-1 1 domain; the sequence is IAMIGFQYAQ…MFQSVPAVIA (268 aa). Residues 605–834 enclose the ABC transporter 1 domain; sequence ISIVDGSFGW…GIYIPTLGLS (230 aa). An ATP-binding site is contributed by 638–645; it reads GPVASGKS. 5 N-linked (GlcNAc...) asparagine glycosylation sites follow: Asn-682, Asn-696, Asn-763, Asn-784, and Asn-843. Helical transmembrane passes span 900–920, 938–958, 1003–1023, and 1024–1044; these read LLSG…MGWW, LFRG…VIFM, GELP…FAMA, and VVVA…FSII. The ABC transmembrane type-1 2 domain occupies 900 to 1139; it reads LLSGIMYAVG…VGVVAISTQL (240 aa). Residue Asn-1101 is glycosylated (N-linked (GlcNAc...) asparagine). A helical membrane pass occupies residues 1116-1136; that stretch reads FLATFLNLIVMVLAVGVVAIS. The ABC transporter 2 domain occupies 1218 to 1468; it reads YKNDDESPAS…EGSWFSQLWA (251 aa). 1255–1262 provides a ligand contact to ATP; that stretch reads GRTGSGKS. N-linked (GlcNAc...) asparagine glycans are attached at residues Asn-1277 and Asn-1293.

Belongs to the ABC transporter superfamily. ABCC family. Conjugate transporter (TC 3.A.1.208) subfamily.

It localises to the cell membrane. It functions in the pathway secondary metabolite biosynthesis. In terms of biological role, ABC transporter; part of the Fg3_54/C64 gene cluster that mediates the biosynthesis of the octapeptide fusaoctaxin A, a virulence factor that is required for cell-to-cell invasiveness of plant host. The 2 nonribosomal peptide synthetases NRPS9 and NRPS5 form an assembly line which likely utilizes GABA as a starter unit (loaded on the unique module M1 of NRPS9) and sequentially incorporates seven extender units composed of the residues L-Ala, L-allo-Ile, L-Ser, L-Val, L-Ser, L-Leu and L-Leu, respectively. During the process, each of the residues that are tethered on modules M3-M7 of NRPS5 containing an E domain can undergo an epimerization reaction to produce a D-configuration before the transpeptidation reaction occurs. The elongation of the peptidyl chain might be terminated by module M8-mediated L-Leu incorporation, followed by R domain-catalyzed 4 electron reduction to release the resulting octapeptide from the assembly line as an alcohol. Fusaoctaxin A is cleaved by the cluster specific ABC transporter FGM5 to the pentapeptide fusapentaxin A and the tripeptide fusatrixin A. The other enzymes from the cluster, FGM1, FGM2, FGM3 and FGM9 seem not to be involved in the biosynthesis of fusaoctaxin A and their functions have still to be determined. This Gibberella zeae (strain ATCC MYA-4620 / CBS 123657 / FGSC 9075 / NRRL 31084 / PH-1) (Wheat head blight fungus) protein is ABC transporter FGM5.